The following is a 214-amino-acid chain: Peroxiredoxin-5, mitochondrial (214 aa).

The N-terminal 52 residues, 1–52 (MGLAGVCALRRSAGYILVGGAGGQSAAAAARRYSEGEWASGGVRSFSRAAAA), are a transit peptide targeting the mitochondrion. A Thioredoxin domain is found at 56–214 (IKVGDAIPAV…SLAPNIISQL (159 aa)). Lys-75 carries the post-translational modification N6-acetyllysine. N6-acetyllysine; alternate is present on Lys-83. N6-succinyllysine; alternate is present on Lys-83. The active-site Cysteine sulfenic acid (-SOH) intermediate is the Cys-100. Residue Cys-100 is the site of S-palmitoyl cysteine attachment. Residues Cys-100 and Cys-204 are joined by a disulfide bond. Position 116 is an N6-succinyllysine (Lys-116). Ser-171 and Ser-182 each carry phosphoserine. The Microbody targeting signal motif lies at 212-214 (SQL).

This sequence belongs to the peroxiredoxin family. Prx5 subfamily. As to quaternary structure, monomer. In terms of processing, S-palmitoylated. Palmitoylation occurs on the active site, inhibiting its reactivity; therefore PRDX5 palmitoylation status determines its antioxidant capacity. Post-translationally, S-palmitoylated. Depalmitoylated by ABHD10. Widely expressed.

The protein resides in the mitochondrion. It is found in the cytoplasm. The protein localises to the peroxisome matrix. The enzyme catalyses a hydroperoxide + [thioredoxin]-dithiol = an alcohol + [thioredoxin]-disulfide + H2O. In terms of biological role, thiol-specific peroxidase that catalyzes the reduction of hydrogen peroxide and organic hydroperoxides to water and alcohols, respectively. Plays a role in cell protection against oxidative stress by detoxifying peroxides and as sensor of hydrogen peroxide-mediated signaling events. The sequence is that of Peroxiredoxin-5, mitochondrial from Homo sapiens (Human).